A 175-amino-acid chain; its full sequence is NADH-ubiquinone oxidoreductase chain 6 (175 aa).

The next 5 membrane-spanning stretches (helical) occupy residues 1–21 (MMTY…VGFS), 25–45 (SPIY…GIVM), 47–67 (FGGS…MLVV), 88–108 (VVMG…LCVL), and 149–169 (YGVW…IVVL).

It belongs to the complex I subunit 6 family.

Its subcellular location is the mitochondrion membrane. The catalysed reaction is a ubiquinone + NADH + 5 H(+)(in) = a ubiquinol + NAD(+) + 4 H(+)(out). Functionally, core subunit of the mitochondrial membrane respiratory chain NADH dehydrogenase (Complex I) that is believed to belong to the minimal assembly required for catalysis. Complex I functions in the transfer of electrons from NADH to the respiratory chain. The immediate electron acceptor for the enzyme is believed to be ubiquinone. This is NADH-ubiquinone oxidoreductase chain 6 (MT-ND6) from Rhinolophus monoceros (Formosan lesser horseshoe bat).